Here is a 561-residue protein sequence, read N- to C-terminus: Septation ring formation regulator EzrA (561 aa).

The Extracellular portion of the chain corresponds to M1 to I3. The helical transmembrane segment at V4–R22 threads the bilayer. Residues R23–G561 are Cytoplasmic-facing. Coiled coils occupy residues R98–L130, A166–K214, and F251–D465.

Belongs to the EzrA family.

Its subcellular location is the cell membrane. Functionally, negative regulator of FtsZ ring formation; modulates the frequency and position of FtsZ ring formation. Inhibits FtsZ ring formation at polar sites. Interacts either with FtsZ or with one of its binding partners to promote depolymerization. The sequence is that of Septation ring formation regulator EzrA from Halalkalibacterium halodurans (strain ATCC BAA-125 / DSM 18197 / FERM 7344 / JCM 9153 / C-125) (Bacillus halodurans).